Here is a 277-residue protein sequence, read N- to C-terminus: 2-dehydro-3-deoxyphosphooctonate aldolase (277 aa).

Belongs to the KdsA family.

The protein localises to the cytoplasm. It catalyses the reaction D-arabinose 5-phosphate + phosphoenolpyruvate + H2O = 3-deoxy-alpha-D-manno-2-octulosonate-8-phosphate + phosphate. The protein operates within carbohydrate biosynthesis; 3-deoxy-D-manno-octulosonate biosynthesis; 3-deoxy-D-manno-octulosonate from D-ribulose 5-phosphate: step 2/3. Its pathway is bacterial outer membrane biogenesis; lipopolysaccharide biosynthesis. The sequence is that of 2-dehydro-3-deoxyphosphooctonate aldolase from Alkalilimnicola ehrlichii (strain ATCC BAA-1101 / DSM 17681 / MLHE-1).